The primary structure comprises 55 residues: Rubredoxin-1 (55 aa).

The Rubredoxin-like domain occupies 1–54 (MKKWQCVVCGLIYDEAKGWPEEGIEAGTRWEDVPEDWLCPDCGVGKLDFEMIEI). The Fe cation site is built by Cys-6, Cys-9, Cys-39, and Cys-42.

The protein belongs to the rubredoxin family. The cofactor is Fe(3+).

It localises to the cytoplasm. It participates in hydrocarbon metabolism; alkane degradation. Functionally, involved in the hydrocarbon hydroxylating system, which transfers electrons from NADH to rubredoxin reductase and then through rubredoxin to alkane 1 monooxygenase. This is Rubredoxin-1 (rubA1) from Pseudomonas aeruginosa (strain ATCC 15692 / DSM 22644 / CIP 104116 / JCM 14847 / LMG 12228 / 1C / PRS 101 / PAO1).